Reading from the N-terminus, the 268-residue chain is Ubiquinone biosynthesis protein COQ4 homolog, mitochondrial (268 aa).

Residues His171, Asp172, His175, and Glu187 each coordinate Zn(2+).

It belongs to the COQ4 family. In terms of assembly, component of a multi-subunit COQ enzyme complex. Zn(2+) is required as a cofactor.

The protein localises to the mitochondrion inner membrane. It carries out the reaction a 4-hydroxy-3-methoxy-5-(all-trans-polyprenyl)benzoate + H(+) = a 2-methoxy-6-(all-trans-polyprenyl)phenol + CO2. The protein operates within cofactor biosynthesis; ubiquinone biosynthesis. In terms of biological role, lyase that catalyzes the C1-decarboxylation of 4-hydroxy-3-methoxy-5-(all-trans-polyprenyl)benzoic acid into 2-methoxy-6-(all-trans-polyprenyl)phenol during ubiquinone biosynthesis. The polypeptide is Ubiquinone biosynthesis protein COQ4 homolog, mitochondrial (Drosophila yakuba (Fruit fly)).